We begin with the raw amino-acid sequence, 445 residues long: Exodeoxyribonuclease 7 large subunit (445 aa).

This sequence belongs to the XseA family. As to quaternary structure, heterooligomer composed of large and small subunits.

The protein resides in the cytoplasm. It carries out the reaction Exonucleolytic cleavage in either 5'- to 3'- or 3'- to 5'-direction to yield nucleoside 5'-phosphates.. In terms of biological role, bidirectionally degrades single-stranded DNA into large acid-insoluble oligonucleotides, which are then degraded further into small acid-soluble oligonucleotides. The chain is Exodeoxyribonuclease 7 large subunit from Limosilactobacillus reuteri (strain DSM 20016) (Lactobacillus reuteri).